The following is a 315-amino-acid chain: DNA-directed RNA polymerase subunit alpha (315 aa).

Residues 1–227 (MTQFQIECVE…NLFNPFKKIN (227 aa)) are alpha N-terminal domain (alpha-NTD). The alpha C-terminal domain (alpha-CTD) stretch occupies residues 239-315 (EDKISQIPIE…PKRKTNKKEN (77 aa)).

Belongs to the RNA polymerase alpha chain family. In terms of assembly, in plastids the minimal PEP RNA polymerase catalytic core is composed of four subunits: alpha, beta, beta', and beta''. When a (nuclear-encoded) sigma factor is associated with the core the holoenzyme is formed, which can initiate transcription.

The protein resides in the plastid. The protein localises to the cyanelle. It carries out the reaction RNA(n) + a ribonucleoside 5'-triphosphate = RNA(n+1) + diphosphate. DNA-dependent RNA polymerase catalyzes the transcription of DNA into RNA using the four ribonucleoside triphosphates as substrates. This chain is DNA-directed RNA polymerase subunit alpha, found in Cyanophora paradoxa.